Here is a 272-residue protein sequence, read N- to C-terminus: ATP phosphoribosyltransferase regulatory subunit (272 aa).

Belongs to the class-II aminoacyl-tRNA synthetase family. HisZ subfamily. As to quaternary structure, heteromultimer composed of HisG and HisZ subunits.

Its subcellular location is the cytoplasm. The protein operates within amino-acid biosynthesis; L-histidine biosynthesis; L-histidine from 5-phospho-alpha-D-ribose 1-diphosphate: step 1/9. Functionally, required for the first step of histidine biosynthesis. May allow the feedback regulation of ATP phosphoribosyltransferase activity by histidine. The sequence is that of ATP phosphoribosyltransferase regulatory subunit from Staphylococcus aureus (strain bovine RF122 / ET3-1).